A 63-amino-acid polypeptide reads, in one-letter code: Cecropin-1 (63 aa).

A signal peptide spans Met1–Thr21. The propeptide occupies Glu22 to Ala23. At Arg62 the chain carries Arginine amide.

The protein belongs to the cecropin family.

The protein localises to the secreted. Functionally, cecropins have lytic and antibacterial activity against several Gram-positive and Gram-negative bacteria. In Ceratitis capitata (Mediterranean fruit fly), this protein is Cecropin-1 (CEC1).